An 88-amino-acid polypeptide reads, in one-letter code: Small ribosomal subunit protein bS20 (88 aa).

It belongs to the bacterial ribosomal protein bS20 family.

Its function is as follows. Binds directly to 16S ribosomal RNA. This is Small ribosomal subunit protein bS20 from Bradyrhizobium sp. (strain BTAi1 / ATCC BAA-1182).